A 176-amino-acid polypeptide reads, in one-letter code: Inner membrane-spanning protein YciB (176 aa).

Helical transmembrane passes span threonine 24–histidine 44, proline 49–histidine 69, tryptophan 76–phenylalanine 96, tyrosine 121–phenylalanine 141, and phenylalanine 149–leucine 169.

Belongs to the YciB family.

It is found in the cell inner membrane. In terms of biological role, plays a role in cell envelope biogenesis, maintenance of cell envelope integrity and membrane homeostasis. This is Inner membrane-spanning protein YciB from Paraburkholderia phymatum (strain DSM 17167 / CIP 108236 / LMG 21445 / STM815) (Burkholderia phymatum).